The following is a 143-amino-acid chain: Trypsin inhibitor CMc (143 aa).

The N-terminal stretch at Met-1–Ala-24 is a signal peptide.

This sequence belongs to the protease inhibitor I6 (cereal trypsin/alpha-amylase inhibitor) family. Endosperm.

The protein resides in the secreted. Functionally, trypsin inhibitor. No alpha-amylase inhibition detected. The sequence is that of Trypsin inhibitor CMc (ITR2) from Hordeum vulgare (Barley).